Consider the following 332-residue polypeptide: Holliday junction branch migration complex subunit RuvB (332 aa).

The large ATPase domain (RuvB-L) stretch occupies residues Met1–Tyr181. ATP-binding positions include Leu20, Arg21, Gly62, Lys65, Thr66, Thr67, Glu128–Phe130, Arg171, Tyr181, and Arg218. Thr66 provides a ligand contact to Mg(2+). Positions Ala182–Asp252 are small ATPAse domain (RuvB-S). Residues His255–Lys332 form a head domain (RuvB-H) region. DNA contacts are provided by Arg291, Arg310, Arg312, and Arg315.

This sequence belongs to the RuvB family. As to quaternary structure, homohexamer. Forms an RuvA(8)-RuvB(12)-Holliday junction (HJ) complex. HJ DNA is sandwiched between 2 RuvA tetramers; dsDNA enters through RuvA and exits via RuvB. An RuvB hexamer assembles on each DNA strand where it exits the tetramer. Each RuvB hexamer is contacted by two RuvA subunits (via domain III) on 2 adjacent RuvB subunits; this complex drives branch migration. In the full resolvosome a probable DNA-RuvA(4)-RuvB(12)-RuvC(2) complex forms which resolves the HJ.

It localises to the cytoplasm. It carries out the reaction ATP + H2O = ADP + phosphate + H(+). Its function is as follows. The RuvA-RuvB-RuvC complex processes Holliday junction (HJ) DNA during genetic recombination and DNA repair, while the RuvA-RuvB complex plays an important role in the rescue of blocked DNA replication forks via replication fork reversal (RFR). RuvA specifically binds to HJ cruciform DNA, conferring on it an open structure. The RuvB hexamer acts as an ATP-dependent pump, pulling dsDNA into and through the RuvAB complex. RuvB forms 2 homohexamers on either side of HJ DNA bound by 1 or 2 RuvA tetramers; 4 subunits per hexamer contact DNA at a time. Coordinated motions by a converter formed by DNA-disengaged RuvB subunits stimulates ATP hydrolysis and nucleotide exchange. Immobilization of the converter enables RuvB to convert the ATP-contained energy into a lever motion, pulling 2 nucleotides of DNA out of the RuvA tetramer per ATP hydrolyzed, thus driving DNA branch migration. The RuvB motors rotate together with the DNA substrate, which together with the progressing nucleotide cycle form the mechanistic basis for DNA recombination by continuous HJ branch migration. Branch migration allows RuvC to scan DNA until it finds its consensus sequence, where it cleaves and resolves cruciform DNA. In Streptococcus pneumoniae serotype 4 (strain ATCC BAA-334 / TIGR4), this protein is Holliday junction branch migration complex subunit RuvB.